The following is a 130-amino-acid chain: Fumarate reductase subunit C (130 aa).

The next 3 helical transmembrane spans lie at 33–53, 60–80, and 109–129; these read AVTT…LKGG, FVTF…LLGA, and VIKL…GIAL.

This sequence belongs to the FrdC family. Part of an enzyme complex containing four subunits: a flavoprotein (FrdA), an iron-sulfur protein (FrdB), and two hydrophobic anchor proteins (FrdC and FrdD).

Its subcellular location is the cell inner membrane. In terms of biological role, two distinct, membrane-bound, FAD-containing enzymes are responsible for the catalysis of fumarate and succinate interconversion; fumarate reductase is used in anaerobic growth, and succinate dehydrogenase is used in aerobic growth. Anchors the catalytic components of the fumarate reductase complex to the cell inner membrane, binds quinones. This Photorhabdus laumondii subsp. laumondii (strain DSM 15139 / CIP 105565 / TT01) (Photorhabdus luminescens subsp. laumondii) protein is Fumarate reductase subunit C.